Consider the following 866-residue polypeptide: Leucine--tRNA ligase (866 aa).

The short motif at 42-52 (PYPSGKLHMGH) is the 'HIGH' region element. A 'KMSKS' region motif is present at residues 624 to 628 (TMSKS). K627 serves as a coordination point for ATP.

This sequence belongs to the class-I aminoacyl-tRNA synthetase family.

It localises to the cytoplasm. It carries out the reaction tRNA(Leu) + L-leucine + ATP = L-leucyl-tRNA(Leu) + AMP + diphosphate. This is Leucine--tRNA ligase from Nitrosospira multiformis (strain ATCC 25196 / NCIMB 11849 / C 71).